We begin with the raw amino-acid sequence, 187 residues long: Putative lipoprotein LppJ (187 aa).

The signal sequence occupies residues 1 to 28 (MPHSTADRRLRLTRQALLAAAVAPLLAG). Cys-29 is lipidated: N-palmitoyl cysteine. A lipid anchor (S-diacylglycerol cysteine) is attached at Cys-29.

The protein localises to the cell membrane. This Mycobacterium bovis (strain ATCC BAA-935 / AF2122/97) protein is Putative lipoprotein LppJ (lppJ).